A 512-amino-acid polypeptide reads, in one-letter code: Transmembrane protein 102 (512 aa).

Topologically, residues 1-267 (MASAVWGNAP…EAWPTLCPAQ (267 aa)) are extracellular. Residues 168 to 258 (PVPGGRDWIH…PGPQPSEARE (91 aa)) are disordered. 2 stretches are compositionally biased toward basic and acidic residues: residues 174-186 (DWIHPTDSREGPR) and 195-209 (PHSDIIEPEAHESLE). The span at 210-226 (KSPSNVSVPESPQQNLT) shows a compositional bias: polar residues. Residues 268-284 (VAAWFFASLAAVAESLF) form a helical membrane-spanning segment. The Cytoplasmic portion of the chain corresponds to 285–512 (PVPGAPRLVH…GLAGVGAGSH (228 aa)).

As to quaternary structure, interacts with CSF2RB; this interaction occurs preferentially in the absence of CSF2.

It localises to the cell membrane. Functionally, selectively involved in CSF2 deprivation-induced apoptosis via a mitochondria-dependent pathway. This Bos taurus (Bovine) protein is Transmembrane protein 102 (TMEM102).